We begin with the raw amino-acid sequence, 99 residues long: MALTKAEMSEHLFEKLGLSKRDAKDLVELFFEEVRRALENGEQVKLSGFGNFDLRDKNQRPGRNPKTGEDIPITARRVVTFRPGQKLKSRVENASPKGE.

Positions 49-73 are disordered; sequence FGNFDLRDKNQRPGRNPKTGEDIPI.

This sequence belongs to the bacterial histone-like protein family. Heterodimer of an alpha and a beta chain.

This protein is one of the two subunits of integration host factor, a specific DNA-binding protein that functions in genetic recombination as well as in transcriptional and translational control. The sequence is that of Integration host factor subunit alpha (ihfA) from Serratia marcescens.